A 132-amino-acid chain; its full sequence is Large ribosomal subunit protein bL12 (132 aa).

Residues 102-126 are compositionally biased toward basic and acidic residues; it reads APKPIKEATNKDDAESIKKQLEEAG. A disordered region spans residues 102–132; it reads APKPIKEATNKDDAESIKKQLEEAGAKASVK.

The protein belongs to the bacterial ribosomal protein bL12 family. In terms of assembly, homodimer. Part of the ribosomal stalk of the 50S ribosomal subunit. Forms a multimeric L10(L12)X complex, where L10 forms an elongated spine to which 2 to 4 L12 dimers bind in a sequential fashion. Binds GTP-bound translation factors.

Forms part of the ribosomal stalk which helps the ribosome interact with GTP-bound translation factors. Is thus essential for accurate translation. This is Large ribosomal subunit protein bL12 from Rippkaea orientalis (strain PCC 8801 / RF-1) (Cyanothece sp. (strain PCC 8801)).